The following is a 445-amino-acid chain: Putative H/ACA ribonucleoprotein complex subunit 4 (445 aa).

The tract at residues 1-32 is disordered; that stretch reads MGKKDKRSKLEGDDLAEAQQKGSFQLPSSNET. Residues 20–32 show a composition bias toward polar residues; it reads QKGSFQLPSSNET. The Nucleophile role is filled by Asp-113. The 76-residue stretch at 284–359 folds into the PUA domain; that stretch reads HKRVVVKDSC…VVAKSKRVIM (76 aa). The tract at residues 386–445 is disordered; it reads LDKFGKPNDTTPKSWAKEYVQTSTKKEVKKEETPDEEEEEAPKKKSKKSKKQESSDSDSD.

Belongs to the pseudouridine synthase TruB family. Component of the small nucleolar ribonucleoprotein particle containing H/ACA-type snoRNAs (H/ACA snoRNPs).

It is found in the nucleus. Its subcellular location is the nucleolus. The enzyme catalyses a uridine in RNA = a pseudouridine in RNA. Its function is as follows. Plays a central role in ribosomal RNA processing. Probable catalytic subunit of H/ACA small nucleolar ribonucleoprotein (H/ACA snoRNP) complex, which catalyzes pseudouridylation of rRNA. This involves the isomerization of uridine such that the ribose is subsequently attached to C5, instead of the normal N1. Pseudouridine ('psi') residues may serve to stabilize the conformation of rRNAs. This chain is Putative H/ACA ribonucleoprotein complex subunit 4, found in Caenorhabditis elegans.